The sequence spans 288 residues: MKRTPHLLAIQSHVVFGHAGNSAAVFPMQRIGVNVWPLNTVQFSNHTQYKQWTGEVLAPQQIPALIDGIAAIGELGNCDAVLSGYLGSAAQGRAILTGVARIKAANPKALYLCDPVMGHPEKGCIVAPEVSDFLLQEAAAMADFMCPNQLELDSFSGRKPESLHDCLAMARALLARGPRAIVVKHLDYPGKAADGFEMLLVTAEASWHLRRPLLAFPRQPVGVGDLTSGLFLSRVLLGDDLVAAFEFAAAAVHEVLLETQACGSYELELVRAQDRIAHPRVKFEAVRL.

Substrate is bound by residues S12 and 47–48 (TQ). ATP contacts are provided by residues D114, E151, K184, and 211–214 (RPLL). D225 contacts substrate.

It belongs to the pyridoxine kinase family. PdxY subfamily. Homodimer. Mg(2+) is required as a cofactor.

It carries out the reaction pyridoxal + ATP = pyridoxal 5'-phosphate + ADP + H(+). It participates in cofactor metabolism; pyridoxal 5'-phosphate salvage; pyridoxal 5'-phosphate from pyridoxal: step 1/1. Its function is as follows. Pyridoxal kinase involved in the salvage pathway of pyridoxal 5'-phosphate (PLP). Catalyzes the phosphorylation of pyridoxal to PLP. The protein is Pyridoxal kinase PdxY of Pseudomonas syringae pv. syringae (strain B728a).